The primary structure comprises 292 residues: ATP synthase gamma chain (292 aa).

It belongs to the ATPase gamma chain family. F-type ATPases have 2 components, CF(1) - the catalytic core - and CF(0) - the membrane proton channel. CF(1) has five subunits: alpha(3), beta(3), gamma(1), delta(1), epsilon(1). CF(0) has three main subunits: a, b and c.

The protein resides in the cell membrane. Functionally, produces ATP from ADP in the presence of a proton gradient across the membrane. The gamma chain is believed to be important in regulating ATPase activity and the flow of protons through the CF(0) complex. This Streptococcus pneumoniae serotype 2 (strain D39 / NCTC 7466) protein is ATP synthase gamma chain.